Consider the following 189-residue polypeptide: Protein GrpE (189 aa).

Positions Met1–Leu13 are enriched in polar residues. A disordered region spans residues Met1 to Asn35.

Belongs to the GrpE family. As to quaternary structure, homodimer.

It is found in the cytoplasm. In terms of biological role, participates actively in the response to hyperosmotic and heat shock by preventing the aggregation of stress-denatured proteins, in association with DnaK and GrpE. It is the nucleotide exchange factor for DnaK and may function as a thermosensor. Unfolded proteins bind initially to DnaJ; upon interaction with the DnaJ-bound protein, DnaK hydrolyzes its bound ATP, resulting in the formation of a stable complex. GrpE releases ADP from DnaK; ATP binding to DnaK triggers the release of the substrate protein, thus completing the reaction cycle. Several rounds of ATP-dependent interactions between DnaJ, DnaK and GrpE are required for fully efficient folding. This chain is Protein GrpE, found in Polaromonas naphthalenivorans (strain CJ2).